We begin with the raw amino-acid sequence, 465 residues long: ATP synthase subunit beta (465 aa).

Gly153 to Thr160 serves as a coordination point for ATP.

This sequence belongs to the ATPase alpha/beta chains family. As to quaternary structure, F-type ATPases have 2 components, CF(1) - the catalytic core - and CF(0) - the membrane proton channel. CF(1) has five subunits: alpha(3), beta(3), gamma(1), delta(1), epsilon(1). CF(0) has three main subunits: a(1), b(2) and c(9-12). The alpha and beta chains form an alternating ring which encloses part of the gamma chain. CF(1) is attached to CF(0) by a central stalk formed by the gamma and epsilon chains, while a peripheral stalk is formed by the delta and b chains.

Its subcellular location is the cell membrane. It catalyses the reaction ATP + H2O + 4 H(+)(in) = ADP + phosphate + 5 H(+)(out). Produces ATP from ADP in the presence of a proton gradient across the membrane. The catalytic sites are hosted primarily by the beta subunits. This chain is ATP synthase subunit beta, found in Clostridium perfringens (strain ATCC 13124 / DSM 756 / JCM 1290 / NCIMB 6125 / NCTC 8237 / Type A).